A 327-amino-acid chain; its full sequence is Xylosidase/arabinosidase 43A (327 aa).

The Proton acceptor role is filled by D12. Catalysis depends on E228, which acts as the Proton donor.

The protein belongs to the glycosyl hydrolase 43 family.

Its subcellular location is the secreted. The catalysed reaction is Hydrolysis of (1-&gt;4)-beta-D-xylans, to remove successive D-xylose residues from the non-reducing termini.. The enzyme catalyses Hydrolysis of terminal non-reducing alpha-L-arabinofuranoside residues in alpha-L-arabinosides.. Activity is inhibited by Ag(+), Li(+), Pb(2+), Cu(2+), Cr(3+), Co(3+), Fe(3+), Ni(2+), Mg(2+), Zn(2+), EDTA and SDS; but not by Mn(2+), Ca(2+) and beta-mercaptoethanol. Bifunctional beta-xylosidase/alpha-L-arabinosidases with a low level of xylanase activity. Is most active on 4-nitrophenyl beta-D-xylopyranoside (pNPX) (defined as 100%), moderate on p-nitrophenyl-alpha-L-arabinofuranoside (pNPA) (23.7%), and weak on beechwood xylan (15.9%) and birchwood xylan (15.2%). Is able to attack xylooligosacchardies with degrees of polymerisation of 2-5, releasing the amounts of reducing sugars in the order of xylopentose &gt; xylotetraose &gt; xylotriose &gt; xylobiose, i.e. the rate of xylose released from xylooligosacchardies increased with the chain length. No activity is detected in the presence of carboxymethyl cellulose-sodium (CMC-Na), sugar beet arabinan, AZCL-arabinan (debranched), 4-nitrophenyl a-D - galactopyranoside, 2-nitrophenyl beta-D-galactopyranoside, and 4-nitrophenyl alpha-D-glucopyranoside. This Humicola insolens (Soft-rot fungus) protein is Xylosidase/arabinosidase 43A.